A 1371-amino-acid polypeptide reads, in one-letter code: DNA-directed RNA polymerase subunit beta' (1371 aa).

The Zn(2+) site is built by Cys71, Cys73, Cys86, and Cys89. Positions 461, 463, and 465 each coordinate Mg(2+). Zn(2+)-binding residues include Cys803, Cys877, Cys884, and Cys887.

Belongs to the RNA polymerase beta' chain family. The RNAP catalytic core consists of 2 alpha, 1 beta, 1 beta' and 1 omega subunit. When a sigma factor is associated with the core the holoenzyme is formed, which can initiate transcription. Requires Mg(2+) as cofactor. Zn(2+) is required as a cofactor.

The enzyme catalyses RNA(n) + a ribonucleoside 5'-triphosphate = RNA(n+1) + diphosphate. In terms of biological role, DNA-dependent RNA polymerase catalyzes the transcription of DNA into RNA using the four ribonucleoside triphosphates as substrates. The polypeptide is DNA-directed RNA polymerase subunit beta' (Thermodesulfovibrio yellowstonii (strain ATCC 51303 / DSM 11347 / YP87)).